A 195-amino-acid polypeptide reads, in one-letter code: PRS fimbrial minor pilin protein (195 aa).

The first 22 residues, 1 to 22 (MRLRFSVPLFFFGCVFVHGVFA), serve as a signal peptide directing secretion. A disulfide bond links Cys58 and Cys97.

It belongs to the fimbrial protein family.

The protein resides in the secreted. The protein localises to the fimbrium. Its function is as follows. Fimbriae (also called pili), polar filaments radiating from the surface of the bacterium to a length of 0.5-1.5 micrometers and numbering 100-300 per cell, enable bacteria to colonize the epithelium of specific host organs. In terms of biological role, seems to anchor the pilus to the bacterial cell. In addition the stoichiometric relationship between PrsH and PrsA determines the pilus length. The sequence is that of PRS fimbrial minor pilin protein (prsH) from Escherichia coli.